The chain runs to 74 residues: Sec-independent protein translocase protein TatA (74 aa).

A helical transmembrane segment spans residues 1–21 (MGSFSIWHWLIVLLIVVLVFG).

Belongs to the TatA/E family. As to quaternary structure, the Tat system comprises two distinct complexes: a TatABC complex, containing multiple copies of TatA, TatB and TatC subunits, and a separate TatA complex, containing only TatA subunits. Substrates initially bind to the TatABC complex, which probably triggers association of the separate TatA complex to form the active translocon.

It localises to the cell inner membrane. Part of the twin-arginine translocation (Tat) system that transports large folded proteins containing a characteristic twin-arginine motif in their signal peptide across membranes. TatA could form the protein-conducting channel of the Tat system. This Nitrosospira multiformis (strain ATCC 25196 / NCIMB 11849 / C 71) protein is Sec-independent protein translocase protein TatA.